A 129-amino-acid chain; its full sequence is Ribosome-binding factor A (129 aa).

This sequence belongs to the RbfA family. Monomer. Binds 30S ribosomal subunits, but not 50S ribosomal subunits or 70S ribosomes.

Its subcellular location is the cytoplasm. In terms of biological role, one of several proteins that assist in the late maturation steps of the functional core of the 30S ribosomal subunit. Associates with free 30S ribosomal subunits (but not with 30S subunits that are part of 70S ribosomes or polysomes). Required for efficient processing of 16S rRNA. May interact with the 5'-terminal helix region of 16S rRNA. In Actinobacillus succinogenes (strain ATCC 55618 / DSM 22257 / CCUG 43843 / 130Z), this protein is Ribosome-binding factor A.